The chain runs to 288 residues: Acetyl-coenzyme A carboxylase carboxyl transferase subunit beta (288 aa).

The 255-residue stretch at Leu-34–Gln-288 folds into the CoA carboxyltransferase N-terminal domain. 4 residues coordinate Zn(2+): Cys-38, Cys-41, Cys-56, and Cys-59. A C4-type zinc finger spans residues Cys-38–Cys-59.

Belongs to the AccD/PCCB family. In terms of assembly, acetyl-CoA carboxylase is a heterohexamer composed of biotin carboxyl carrier protein (AccB), biotin carboxylase (AccC) and two subunits each of ACCase subunit alpha (AccA) and ACCase subunit beta (AccD). Zn(2+) is required as a cofactor.

Its subcellular location is the cytoplasm. It carries out the reaction N(6)-carboxybiotinyl-L-lysyl-[protein] + acetyl-CoA = N(6)-biotinyl-L-lysyl-[protein] + malonyl-CoA. It participates in lipid metabolism; malonyl-CoA biosynthesis; malonyl-CoA from acetyl-CoA: step 1/1. Component of the acetyl coenzyme A carboxylase (ACC) complex. Biotin carboxylase (BC) catalyzes the carboxylation of biotin on its carrier protein (BCCP) and then the CO(2) group is transferred by the transcarboxylase to acetyl-CoA to form malonyl-CoA. This is Acetyl-coenzyme A carboxylase carboxyl transferase subunit beta from Streptococcus pyogenes serotype M6 (strain ATCC BAA-946 / MGAS10394).